The sequence spans 334 residues: Cytoskeleton protein RodZ (334 aa).

The Cytoplasmic segment spans residues Met1–Gly111. The 53-residue stretch at Leu19–Leu71 folds into the HTH cro/C1-type domain. Residues Gln30 to Glu49 constitute a DNA-binding region (H-T-H motif). Residues Trp112 to Trp132 traverse the membrane as a helical; Signal-anchor for type II membrane protein segment. Over Trp133–Gln334 the chain is Periplasmic. The tract at residues Leu154–Gly241 is disordered. 2 stretches are compositionally biased toward low complexity: residues Thr176–Ala211 and Thr219–Gly241.

Belongs to the RodZ family.

The protein localises to the cell inner membrane. Its function is as follows. Cytoskeletal protein that is involved in cell-shape control through regulation of the length of the long axis. In Salmonella choleraesuis (strain SC-B67), this protein is Cytoskeleton protein RodZ.